The sequence spans 203 residues: Translation initiation factor IF-3 (203 aa).

Positions 168–203 are disordered; it reads QLSPKKKESATKKPATPKPATPAAVKAEKPAGDNEE. Over residues 193–203 the composition is skewed to basic and acidic residues; sequence KAEKPAGDNEE.

The protein belongs to the IF-3 family. Monomer.

Its subcellular location is the cytoplasm. IF-3 binds to the 30S ribosomal subunit and shifts the equilibrium between 70S ribosomes and their 50S and 30S subunits in favor of the free subunits, thus enhancing the availability of 30S subunits on which protein synthesis initiation begins. The protein is Translation initiation factor IF-3 of Bacteroides fragilis (strain ATCC 25285 / DSM 2151 / CCUG 4856 / JCM 11019 / LMG 10263 / NCTC 9343 / Onslow / VPI 2553 / EN-2).